A 263-amino-acid polypeptide reads, in one-letter code: Type II restriction enzyme TthHB8I (263 aa).

It catalyses the reaction Endonucleolytic cleavage of DNA to give specific double-stranded fragments with terminal 5'-phosphates.. Functionally, a P subtype restriction enzyme that recognizes the double-stranded sequence 5'-TCGA-3' and cleaves after T-1. The sequence is that of Type II restriction enzyme TthHB8I (tthHB8IR) from Thermus thermophilus (strain ATCC 27634 / DSM 579 / HB8).